A 581-amino-acid chain; its full sequence is Alpha-amylase 2 (581 aa).

An N-terminal signal peptide occupies residues 1–24; that stretch reads MNYRRNICLRIGWMLLFAFIPAYA. An intrachain disulfide couples C56 to C64. A substrate-binding site is contributed by W109. Residue N147 coordinates Ca(2+). C176 and C191 form a disulfide bridge. D202 lines the Ca(2+) pocket. Position 231 (R231) interacts with substrate. The Ca(2+) site is built by D233, H237, and E257. Catalysis depends on D233, which acts as the Nucleophile. 236-237 contacts substrate; sequence KH. E257 serves as the catalytic Proton donor. G261 is a substrate binding site. C267 and C311 are oxidised to a cystine. A glycan (N-linked (GlcNAc...) asparagine) is linked at N291. D325 contacts substrate. Residue N332 is glycosylated (N-linked (GlcNAc...) asparagine). R372 serves as a coordination point for substrate. S551 carries the GPI-anchor amidated serine lipid modification. A propeptide spans 552–581 (removed in mature form); that stretch reads EAKTIRSFTKLKLFILLIAVPFALPMIILI.

It belongs to the glycosyl hydrolase 13 family. Requires Ca(2+) as cofactor.

It is found in the cell membrane. It carries out the reaction Endohydrolysis of (1-&gt;4)-alpha-D-glucosidic linkages in polysaccharides containing three or more (1-&gt;4)-alpha-linked D-glucose units.. This Schizosaccharomyces pombe (strain 972 / ATCC 24843) (Fission yeast) protein is Alpha-amylase 2 (aah2).